We begin with the raw amino-acid sequence, 1134 residues long: MGKEQELLEAARTGHLPAVEKLLSGKRLSSGFGGGGGGGSGGGGGGSGGGGGGLGSSSHPLSSLLSMWRGPNVNCVDSTGYTPLHHAALNGHKDVVEVLLRNDALTNVADSKGCYPLHLAAWKGDAQIVRLLIHQGPSHTRVNEQNNDNETALHCAAQYGHTEVVKVLLEELTDPTMRNNKFETPLDLAALYGRLEVVKMLLNAHPNLLSCNTKKHTPLHLAARNGHKAVVQVLLDAGMDSNYQTEMGSALHEAALFGKTDVVQILLAAGTDVNIKDNHGLTALDTVRELPSQKSQQIAALIEDHMTGKRSTKEVDKTPPPQPPLISSMDSISQKSQGDVEKAVTELIIDFDANAEEEGPYEALYNAISCHSLDSMASGRSSDQDSTNKEAEAAGVKPAGVRPRERPPPPAKPPPDEEEEDHIDKKYFPLTASEVLSMRPRIHGSAAREEDEHPYELLLTAETKKVVLVDGKTKDHRRSSSSRSQDSAEGQDGQVPEQFSGLLHGSSPVCEVGQDPFQLLCTAGQSHPDGSPQQGACHKASMQLEETGVHAPGASQPSALDQSKRVGYLTGLPTTNSRSHPETLTHTASPHPGGAEEGDRSGARSRAPPTSKPKAELKLSRSLSKSDSDLLTCSPTEDATMGSRSESLSNCSIGKKRLEKSPSFASEWDEIEKIMSSIGEGIDFSQERQKISGLRTLEQSVGEWLESIGLQQYESKLLLNGFDDVHFLGSNVMEEQDLRDIGISDPQHRRKLLQAARSLPKVKALGYDGNSPPSVPSWLDSLGLQDYVHSFLSSGYSSIDTVKNLWELELVNVLKVQLLGHRKRIIASLADRPYEEPPQKPPRFSQLRCQDLLSQTSSPLSQNDSCTGRSADLLLPPGDTGRRRHDSLHDPAAPSRAERFRIQEEHREAKLTLRPPSLAAPYAPVQSWQHQPEKLIFESCGYEANYLGSMLIKDLRGTESTQDACAKMRKSTEHMKKIPTIILSITYKGVKFIDASNKNVIAEHEIRNISCAAQDPEDLCTFAYITKDLQTSHHYCHVFSTVDVNLTYEIILTLGQAFEVAYQLALQAQKSRATGASAAEMIETKSSKPVPKPRVGVRKSALEPPDMDQDAQSHASVSWVVDPKPDSKRSLSTN.

N-acetylglycine is present on Gly2. A compositionally biased stretch (gly residues) spans 33–55 (GGGGGGGSGGGGGGSGGGGGGLG). A disordered region spans residues 33-57 (GGGGGGGSGGGGGGSGGGGGGLGSS). ANK repeat units lie at residues 79–108 (TGYT…LTNV), 112–141 (KGCY…SHTR), 148–177 (DNET…DPTM), 181–210 (KFET…NLLS), 214–243 (KKHT…DSNY), and 246–275 (EMGS…DVNI). Over residues 305–317 (HMTGKRSTKEVDK) the composition is skewed to basic and acidic residues. 3 disordered regions span residues 305 to 338 (HMTG…KSQG), 375 to 422 (SMAS…EEDH), and 469 to 498 (VDGK…VPEQ). Position 318 is a phosphothreonine (Thr318). Positions 328–337 (SMDSISQKSQ) are enriched in polar residues. Basic and acidic residues predominate over residues 382–392 (SDQDSTNKEAE). At Ser507 the chain carries Phosphoserine. The segment at 569–650 (LTGLPTTNSR…MGSRSESLSN (82 aa)) is disordered. Over residues 572–588 (LPTTNSRSHPETLTHTA) the composition is skewed to polar residues. The segment covering 613–628 (PKAELKLSRSLSKSDS) has biased composition (basic and acidic residues). Residues Ser620, Ser622, Ser624, Ser626, Ser628, Ser647, Ser661, Ser663, Ser666, and Ser677 each carry the phosphoserine modification. Polar residues predominate over residues 633–650 (CSPTEDATMGSRSESLSN). SAM domains lie at 696-762 (TLEQ…LPKV) and 770-837 (NSPP…YEEP). Polar residues predominate over residues 856-868 (TSSPLSQNDSCTG). Disordered stretches follow at residues 856-896 (TSSP…APSR) and 1079-1134 (AEMI…LSTN). Residue Ser887 is modified to Phosphoserine. Residues 936-1091 (IFESCGYEAN…IETKSSKPVP (156 aa)) enclose the PID domain. The span at 1123 to 1134 (PKPDSKRSLSTN) shows a compositional bias: basic and acidic residues.

As to quaternary structure, interacts (via SAM domain) with EPHA2 (via SAM domain). Interacts with EPHA8; EPHA8 kinase activity-independent but stimulated by EPHA8 ubiquitination. Interacts (via SAM domain) with EPHA6 (via SAM domain). Phosphorylated on tyrosine residues in response to EGF and PDGF. Widely expressed (at protein level).

It is found in the cytoplasm. It localises to the cell projection. Its function is as follows. Regulator of different signaling pathways. Regulates EPHA8 receptor tyrosine kinase signaling to control cell migration and neurite retraction. The polypeptide is Ankyrin repeat and SAM domain-containing protein 1A (ANKS1A) (Homo sapiens (Human)).